The following is a 291-amino-acid chain: 4-diphosphocytidyl-2-C-methyl-D-erythritol kinase (291 aa).

Lysine 11 is a catalytic residue. Proline 97–serine 107 contacts ATP. Aspartate 139 is an active-site residue.

The protein belongs to the GHMP kinase family. IspE subfamily.

It carries out the reaction 4-CDP-2-C-methyl-D-erythritol + ATP = 4-CDP-2-C-methyl-D-erythritol 2-phosphate + ADP + H(+). Its pathway is isoprenoid biosynthesis; isopentenyl diphosphate biosynthesis via DXP pathway; isopentenyl diphosphate from 1-deoxy-D-xylulose 5-phosphate: step 3/6. Its function is as follows. Catalyzes the phosphorylation of the position 2 hydroxy group of 4-diphosphocytidyl-2C-methyl-D-erythritol. The sequence is that of 4-diphosphocytidyl-2-C-methyl-D-erythritol kinase from Methylorubrum extorquens (strain CM4 / NCIMB 13688) (Methylobacterium extorquens).